We begin with the raw amino-acid sequence, 903 residues long: Alanine--tRNA ligase (903 aa).

Zn(2+)-binding residues include histidine 591, histidine 595, cysteine 695, and histidine 699.

This sequence belongs to the class-II aminoacyl-tRNA synthetase family. The cofactor is Zn(2+).

Its subcellular location is the cytoplasm. It catalyses the reaction tRNA(Ala) + L-alanine + ATP = L-alanyl-tRNA(Ala) + AMP + diphosphate. Functionally, catalyzes the attachment of alanine to tRNA(Ala) in a two-step reaction: alanine is first activated by ATP to form Ala-AMP and then transferred to the acceptor end of tRNA(Ala). Also edits incorrectly charged Ser-tRNA(Ala) and Gly-tRNA(Ala) via its editing domain. This is Alanine--tRNA ligase from Methanosphaera stadtmanae (strain ATCC 43021 / DSM 3091 / JCM 11832 / MCB-3).